The chain runs to 254 residues: Bacteriorhodopsin-I (254 aa).

Residues 1–6 (MSQLAL) constitute a propeptide that is removed on maturation. The residue at position 7 (glutamine 7) is a Pyrrolidone carboxylic acid. Helical transmembrane passes span 16–36 (EGIW…YFIA), 51–71 (VITI…FFGF), 91–111 (YADW…LAGA), 116–136 (IGAL…ATLT), 144–164 (AFWT…VAVF), 185–205 (IILV…EGLA), and 212–232 (ETLL…FILL). An N6-(retinylidene)lysine modification is found at lysine 224.

The protein belongs to the archaeal/bacterial/fungal opsin family. In terms of processing, the covalent binding of retinal to the apoprotein, bacterioopsin, generates bacteriorhodopsin.

The protein resides in the cell membrane. Light-driven proton pump. The polypeptide is Bacteriorhodopsin-I (bop1) (Haloquadratum walsbyi (strain DSM 16854 / JCM 12705 / C23)).